The sequence spans 211 residues: Thiamine-phosphate synthase (211 aa).

4-amino-2-methyl-5-(diphosphooxymethyl)pyrimidine is bound by residues 37 to 41 (QLRIK) and N69. Positions 70 and 89 each coordinate Mg(2+). Residue S108 coordinates 4-amino-2-methyl-5-(diphosphooxymethyl)pyrimidine. 134–136 (TQT) contacts 2-[(2R,5Z)-2-carboxy-4-methylthiazol-5(2H)-ylidene]ethyl phosphate. K137 serves as a coordination point for 4-amino-2-methyl-5-(diphosphooxymethyl)pyrimidine. 2-[(2R,5Z)-2-carboxy-4-methylthiazol-5(2H)-ylidene]ethyl phosphate contacts are provided by residues G166 and 186–187 (VS).

It belongs to the thiamine-phosphate synthase family. The cofactor is Mg(2+).

It catalyses the reaction 2-[(2R,5Z)-2-carboxy-4-methylthiazol-5(2H)-ylidene]ethyl phosphate + 4-amino-2-methyl-5-(diphosphooxymethyl)pyrimidine + 2 H(+) = thiamine phosphate + CO2 + diphosphate. The catalysed reaction is 2-(2-carboxy-4-methylthiazol-5-yl)ethyl phosphate + 4-amino-2-methyl-5-(diphosphooxymethyl)pyrimidine + 2 H(+) = thiamine phosphate + CO2 + diphosphate. It carries out the reaction 4-methyl-5-(2-phosphooxyethyl)-thiazole + 4-amino-2-methyl-5-(diphosphooxymethyl)pyrimidine + H(+) = thiamine phosphate + diphosphate. It functions in the pathway cofactor biosynthesis; thiamine diphosphate biosynthesis; thiamine phosphate from 4-amino-2-methyl-5-diphosphomethylpyrimidine and 4-methyl-5-(2-phosphoethyl)-thiazole: step 1/1. Condenses 4-methyl-5-(beta-hydroxyethyl)thiazole monophosphate (THZ-P) and 2-methyl-4-amino-5-hydroxymethyl pyrimidine pyrophosphate (HMP-PP) to form thiamine monophosphate (TMP). This is Thiamine-phosphate synthase from Klebsiella pneumoniae subsp. pneumoniae (strain ATCC 700721 / MGH 78578).